The primary structure comprises 704 residues: Pentatricopeptide repeat-containing protein At1g56690, mitochondrial (704 aa).

The transit peptide at 1–12 (MKRLKLILRRTY) directs the protein to the mitochondrion. PPR repeat units follow at residues 16-46 (TGVN…LQFK), 47-81 (AIGS…NVVS), 82-108 (WNGL…MPER), 109-143 (NVVS…NEVS), 144-170 (WTVM…MPVK), 171-205 (DVVA…NVVT), 206-232 (WTTM…MPEK), 233-267 (TEVS…PVIA), 268-294 (CNAM…MEDR), 295-329 (DNAT…GVRP), 330-364 (SFPS…QFDD), 365-395 (DVYV…FSSK), 396-430 (DIIM…GTMP), 431-465 (NKVT…FCVT), and 467-497 (TVEH…MTIK). The type E motif stretch occupies residues 502–577 (VWGALLGACK…FPGCSWIEVG (76 aa)). Residues 578–609 (KKVHMFTRGGIKNHPEQAMILMMLEKTDGLLR) are type E(+) motif. The interval 610–704 (EAGYSPDCSH…NGECSCRDYW (95 aa)) is type DYW motif.

This sequence belongs to the PPR family. PCMP-H subfamily.

It is found in the mitochondrion. The sequence is that of Pentatricopeptide repeat-containing protein At1g56690, mitochondrial (PCMP-H69) from Arabidopsis thaliana (Mouse-ear cress).